The following is a 110-amino-acid chain: PTS system oligo-beta-mannoside-specific EIIA component (110 aa).

Residues leucine 9–threonine 107 form the PTS EIIA type-3 domain. Residue histidine 83 is the Tele-phosphohistidine intermediate of the active site. Position 83 is a phosphohistidine; by HPr (histidine 83).

It localises to the cytoplasm. Its function is as follows. The phosphoenolpyruvate-dependent sugar phosphotransferase system (sugar PTS), a major carbohydrate active transport system, catalyzes the phosphorylation of incoming sugar substrates concomitantly with their translocation across the cell membrane. The enzyme II GmuABC PTS system is involved in the transport of oligo-glucomannans such as cellobiose or mannobiose. This Bacillus subtilis (strain 168) protein is PTS system oligo-beta-mannoside-specific EIIA component.